The following is a 476-amino-acid chain: Replication factor C large subunit (476 aa).

43-50 lines the ATP pocket; that stretch reads GKPGIGKT. A disordered region spans residues 435–476; it reads LEALRMQEPPVPETPPAAEEQPLEEPQEEKKLAPKQATLDFF.

It belongs to the activator 1 small subunits family. RfcL subfamily. Heteromultimer composed of small subunits (RfcS) and large subunits (RfcL).

Functionally, part of the RFC clamp loader complex which loads the PCNA sliding clamp onto DNA. The sequence is that of Replication factor C large subunit from Methanocorpusculum labreanum (strain ATCC 43576 / DSM 4855 / Z).